The chain runs to 479 residues: Adenosylhomocysteinase (479 aa).

Residues Thr-65, Asp-145, and Glu-205 each contribute to the substrate site. Residue 206-208 (TTT) participates in NAD(+) binding. Substrate contacts are provided by Lys-235 and Asp-239. NAD(+) is bound by residues Asn-240, 269–274 (GYGDVG), Glu-292, Asn-327, 348–350 (IGH), and Asn-393.

Belongs to the adenosylhomocysteinase family. The cofactor is NAD(+).

It is found in the cytoplasm. The enzyme catalyses S-adenosyl-L-homocysteine + H2O = L-homocysteine + adenosine. The protein operates within amino-acid biosynthesis; L-homocysteine biosynthesis; L-homocysteine from S-adenosyl-L-homocysteine: step 1/1. Functionally, may play a key role in the regulation of the intracellular concentration of adenosylhomocysteine. This Herminiimonas arsenicoxydans protein is Adenosylhomocysteinase.